A 366-amino-acid polypeptide reads, in one-letter code: MISSFHRPTVARVNLQAIKENVASVQKHIPLGVKTYAVVKADAYGHGAVQVSKALLPQVDGYCVSNLDEALQLRQAGIDKEILILGVLLPNELELAVANAITVTIASLDWIALARLEKKECQGLKVHVKVDSGMGRIGLRSSKEVNLLIDSLKELGADVEGIFTHFATADEADDTKFNQQLQFFKKLIAGLEDKPRLVHASNSATSIWHSDTIFNAVRLGIVSYGLNPSGSDLSLPFPLQEALSLESSLVHVKMISAGDTVGYGATYTAKKSEYVGTVPIGYADGWTRNMQGFSVLVDGQFCEIIGRVSMDQLTIRLPKAYPLGTKVTLIGSNQQKNISTTDIANYRNTINYEVLCLLSDRIPRIY.

K40 serves as the catalytic Proton acceptor; specific for D-alanine. K40 bears the N6-(pyridoxal phosphate)lysine mark. R136 lines the substrate pocket. Catalysis depends on Y263, which acts as the Proton acceptor; specific for L-alanine. Residue M310 participates in substrate binding.

It belongs to the alanine racemase family. It depends on pyridoxal 5'-phosphate as a cofactor.

It catalyses the reaction L-alanine = D-alanine. Its pathway is amino-acid biosynthesis; D-alanine biosynthesis; D-alanine from L-alanine: step 1/1. In terms of biological role, catalyzes the interconversion of L-alanine and D-alanine. May also act on other amino acids. This Streptococcus pyogenes serotype M1 protein is Alanine racemase (alr).